Reading from the N-terminus, the 320-residue chain is Mitochondrial ribosome-associated GTPase 1 (320 aa).

One can recognise a CP-type G domain in the interval 37-209 (LKQMRASPRK…LLDTPGVLPP (173 aa)). GTP is bound by residues 81–84 (NKMD), 153–158 (NVGKSS), and Gly-205.

The protein belongs to the TRAFAC class YlqF/YawG GTPase family. MTG1 subfamily.

It is found in the mitochondrion inner membrane. Its function is as follows. Plays a role in the regulation of the mitochondrial ribosome assembly and of translational activity. Displays mitochondrial GTPase activity. This is Mitochondrial ribosome-associated GTPase 1 from Ictalurus punctatus (Channel catfish).